The chain runs to 521 residues: Probable ATP-dependent RNA helicase Dbp45A (521 aa).

The short motif at 7–35 (NPFQILGLRPWLVKQLTKLGLKGATPIQQ) is the Q motif element. One can recognise a Helicase ATP-binding domain in the interval 38-209 (IPAILAGQDC…IFPIASDCFE (172 aa)). 51 to 58 (AKTGSGKT) contributes to the ATP binding site. Positions 157–160 (DEAD) match the DEAD box motif. Residues 237-386 (VLIEALRKYR…EHPIDQRMVE (150 aa)) form the Helicase C-terminal domain. A disordered region spans residues 448–521 (KRKLQHAEPA…GRADVKKDKA (74 aa)). 2 stretches are compositionally biased toward basic and acidic residues: residues 460–482 (EEGKALLQDERFKSVDSARFEKK) and 502–521 (LNKEKPVAQKGRADVKKDKA).

The protein belongs to the DEAD box helicase family. DDX49/DBP8 subfamily.

It catalyses the reaction ATP + H2O = ADP + phosphate + H(+). Functionally, probable ATP-binding RNA helicase. This chain is Probable ATP-dependent RNA helicase Dbp45A (Dbp45A), found in Drosophila melanogaster (Fruit fly).